The following is a 574-amino-acid chain: Proline--tRNA ligase (574 aa).

It belongs to the class-II aminoacyl-tRNA synthetase family. ProS type 1 subfamily. As to quaternary structure, homodimer.

It is found in the cytoplasm. The enzyme catalyses tRNA(Pro) + L-proline + ATP = L-prolyl-tRNA(Pro) + AMP + diphosphate. Functionally, catalyzes the attachment of proline to tRNA(Pro) in a two-step reaction: proline is first activated by ATP to form Pro-AMP and then transferred to the acceptor end of tRNA(Pro). As ProRS can inadvertently accommodate and process non-cognate amino acids such as alanine and cysteine, to avoid such errors it has two additional distinct editing activities against alanine. One activity is designated as 'pretransfer' editing and involves the tRNA(Pro)-independent hydrolysis of activated Ala-AMP. The other activity is designated 'posttransfer' editing and involves deacylation of mischarged Ala-tRNA(Pro). The misacylated Cys-tRNA(Pro) is not edited by ProRS. The polypeptide is Proline--tRNA ligase (Hahella chejuensis (strain KCTC 2396)).